A 326-amino-acid chain; its full sequence is Pyruvate dehydrogenase E1 component subunit beta (326 aa).

Thiamine diphosphate is bound at residue glutamate 59.

In terms of assembly, heterodimer of an alpha and a beta chain. Thiamine diphosphate serves as cofactor.

It carries out the reaction N(6)-[(R)-lipoyl]-L-lysyl-[protein] + pyruvate + H(+) = N(6)-[(R)-S(8)-acetyldihydrolipoyl]-L-lysyl-[protein] + CO2. The pyruvate dehydrogenase complex catalyzes the overall conversion of pyruvate to acetyl-CoA and CO(2). It contains multiple copies of three enzymatic components: pyruvate dehydrogenase (E1), dihydrolipoamide acetyltransferase (E2) and lipoamide dehydrogenase (E3). In Rickettsia conorii (strain ATCC VR-613 / Malish 7), this protein is Pyruvate dehydrogenase E1 component subunit beta (pdhB).